A 494-amino-acid polypeptide reads, in one-letter code: Tripartite motif-containing protein 5 (494 aa).

At alanine 2 the chain carries N-acetylalanine. The segment at 15 to 59 adopts an RING-type zinc-finger fold; it reads CPICLELLTQPLSLDCGHSFCQACLTANHKTSMPDEGERSCPVCR. Serine 86 is modified (phosphoserine). The B box-type zinc-finger motif lies at 91–133; the sequence is QKVDHCARHGEKLLLFCREDRKVICWLCERSQEHRGHHTFLTE. Residues cysteine 96, histidine 99, cysteine 118, and histidine 124 each contribute to the Zn(2+) site. The stretch at 132 to 241 forms a coiled coil; it reads TEEVAQEYQV…LISDLEHRLQ (110 aa). A required for interaction with GABARAP and for autophagy region spans residues 186-199; it reads FEQLRHILDWVESN. Residues 282-494 enclose the B30.2/SPRY domain; it reads LKVMLKKLRE…VPMTLCSPSS (213 aa).

This sequence belongs to the TRIM/RBCC family. Can form homodimers and homotrimers. In addition to lower-order dimerization, also exhibits a higher-order multimerization and both low- and high-order multimerizations are essential for its restriction activity. Interacts with BTBD1 and BTBD2. Interacts with PSMC4, PSMC5, PSMD7 and HSPA8/HSC70. Interacts (via B30.2/SPRY domain) with HSPA1A/B. Interacts with PSMC2, MAP3K7/TAK1, TAB2 and TAB3. Interacts with SQSTM1. Interacts with TRIM6 and TRIM34. Interacts with ULK1 (phosphorylated form), GABARAP, GABARAPL1, GABARAPL2, MAP1LC3A, MAP1LC3C and BECN1. Degraded in a proteasome-independent fashion in the absence of viral infection but in a proteasome-dependent fashion following exposure to restriction sensitive virus. In terms of processing, autoubiquitinated in a RING finger- and UBE2D2-dependent manner. Monoubiquitinated by TRIM21. Deubiquitinated by Yersinia YopJ. Ubiquitination may not lead to proteasomal degradation.

The protein resides in the cytoplasm. Its subcellular location is the nucleus. It catalyses the reaction S-ubiquitinyl-[E2 ubiquitin-conjugating enzyme]-L-cysteine + [acceptor protein]-L-lysine = [E2 ubiquitin-conjugating enzyme]-L-cysteine + N(6)-ubiquitinyl-[acceptor protein]-L-lysine.. It functions in the pathway protein modification; protein ubiquitination. Its function is as follows. Capsid-specific restriction factor that prevents infection from non-host-adapted retroviruses. Blocks viral replication early in the life cycle, after viral entry but before reverse transcription. In addition to acting as a capsid-specific restriction factor, also acts as a pattern recognition receptor that activates innate immune signaling in response to the retroviral capsid lattice. Binding to the viral capsid triggers its E3 ubiquitin ligase activity, and in concert with the heterodimeric ubiquitin conjugating enzyme complex UBE2V1-UBE2N (also known as UBC13-UEV1A complex) generates 'Lys-63'-linked polyubiquitin chains, which in turn are catalysts in the autophosphorylation of the MAP3K7/TAK1 complex (includes TAK1, TAB2, and TAB3). Activation of the MAP3K7/TAK1 complex by autophosphorylation results in the induction and expression of NF-kappa-B and MAPK-responsive inflammatory genes, thereby leading to an innate immune response in the infected cell. Plays a role in regulating autophagy through activation of autophagy regulator BECN1 by causing its dissociation from its inhibitors BCL2 and TAB2. In Nomascus leucogenys (Northern white-cheeked gibbon), this protein is Tripartite motif-containing protein 5 (TRIM5).